Reading from the N-terminus, the 237-residue chain is uncharacterized protein (237 aa).

The region spanning 119-237 (VTVRRLTPTD…PAGLDGGLPA (119 aa)) is the N-acetyltransferase domain.

This is an uncharacterized protein from Streptomyces virginiae (Streptomyces cinnamonensis).